The following is a 158-amino-acid chain: Large ribosomal subunit protein bL35m (158 aa).

It belongs to the bacterial ribosomal protein bL35 family.

The protein localises to the mitochondrion. The polypeptide is Large ribosomal subunit protein bL35m (mrpl-35) (Caenorhabditis elegans).